We begin with the raw amino-acid sequence, 308 residues long: uncharacterized protein (308 aa).

Residues glycine 158–glutamate 221 are disordered. A compositionally biased stretch (basic and acidic residues) spans arginine 206 to glutamate 221.

This is an uncharacterized protein from Arabidopsis thaliana (Mouse-ear cress).